The following is a 337-amino-acid chain: Diacylglycerol O-acyltransferase 2-like protein 6 (337 aa).

Helical transmembrane passes span 22–42 (IPVY…LLLF) and 102–122 (YIIL…NFAT).

The protein belongs to the diacylglycerol acyltransferase family.

Its subcellular location is the endoplasmic reticulum membrane. The enzyme catalyses 1,2-di-(9Z-octadecenoyl)-sn-glycerol + (9Z)-octadecenoyl-CoA = 1,2,3-tri-(9Z-octadecenoyl)-glycerol + CoA. Functionally, diglyceride acyltransferase that uses fatty acyl-CoA as substrate. Particularly active with oleate as a substrate. Has no wax synthase activity to produce wax esters. This is Diacylglycerol O-acyltransferase 2-like protein 6 (Dgat2l6) from Mus musculus (Mouse).